Here is a 275-residue protein sequence, read N- to C-terminus: Echotoxin-2 (275 aa).

The first 23 residues, 1-23, serve as a signal peptide directing secretion; sequence MKRNILALVVVVALISQSRPAES. Positions 23 to 32 are plays an important role in the hemolytic activity; sequence SAGGTIIATL. Positions 49 to 67 are N-terminal region; that stretch reads ETGASVASAAAAATSSDYS. Phosphocholine contacts are provided by Gly-123, Ser-141, Pro-143, Tyr-176, and Tyr-177. The tract at residues 141-156 is trp-rich region, which is important for the binding to lipid membrane; sequence SAPYNFDFYSNWLAVG. The propeptide occupies 249 to 275; sequence RAIQQELARRAEEEKQRKRKALDEMLK.

It belongs to the actinoporin family. Sea anemone subfamily. In terms of assembly, octamer or nonamer in membranes. Monomer in the soluble state. As to expression, salivary gland.

Its subcellular location is the secreted. The protein localises to the nematocyst. It is found in the target cell membrane. Functionally, pore-forming protein that forms cations-selective hydrophilic pores of around 1 nm and causes cardiac stimulation and cytolysis. Pore formation is a multi-step process that involves specific recognition of membrane sphingomyelin (but neither cholesterol nor phosphatidylcholine) using aromatic rich region and adjacent phosphocholine (POC) binding site, firm binding to the membrane (mainly driven by hydrophobic interactions) accompanied by the transfer of the N-terminal region to the lipid-water interface and finally pore formation after oligomerization of monomers. Exhibits both hemolytic and lethal activities. Gangliosides potently inhibits the hemolytic activity. The chain is Echotoxin-2 from Monoplex parthenopeus (Giant triton).